The primary structure comprises 279 residues: Small ribosomal subunit protein uS9m (279 aa).

The protein belongs to the universal ribosomal protein uS9 family.

Its subcellular location is the mitochondrion. The sequence is that of Small ribosomal subunit protein uS9m (MRPS9) from Eremothecium gossypii (strain ATCC 10895 / CBS 109.51 / FGSC 9923 / NRRL Y-1056) (Yeast).